A 666-amino-acid chain; its full sequence is ATP synthase subunit alpha 2 (666 aa).

182 to 189 is a binding site for ATP; it reads GDRATGKT. Positions 527–666 are disordered; sequence MPAEDAAGDI…DAEAEARHKR (140 aa). The segment covering 545–590 has biased composition (basic and acidic residues); the sequence is ARGDADRDADHGANREVSREVSPEASREVSREVSCEVSHEADRDAA. Over residues 591-601 the composition is skewed to low complexity; that stretch reads ADAARVAGRAP. Residues 623 to 641 show a composition bias toward basic and acidic residues; that stretch reads ADGDRASASRPRPDARGDA.

This sequence belongs to the ATPase alpha/beta chains family. As to quaternary structure, F-type ATPases have 2 components, CF(1) - the catalytic core - and CF(0) - the membrane proton channel. CF(1) has five subunits: alpha(3), beta(3), gamma(1), delta(1), epsilon(1). CF(0) has three main subunits: a(1), b(2) and c(9-12). The alpha and beta chains form an alternating ring which encloses part of the gamma chain. CF(1) is attached to CF(0) by a central stalk formed by the gamma and epsilon chains, while a peripheral stalk is formed by the delta and b chains.

It localises to the cell inner membrane. The catalysed reaction is ATP + H2O + 4 H(+)(in) = ADP + phosphate + 5 H(+)(out). Produces ATP from ADP in the presence of a proton gradient across the membrane. The alpha chain is a regulatory subunit. This chain is ATP synthase subunit alpha 2, found in Burkholderia pseudomallei (strain 1106a).